An 86-amino-acid chain; its full sequence is High affinity immunoglobulin epsilon receptor subunit gamma (86 aa).

Residues 1 to 18 form the signal peptide; the sequence is MISAVILFLLLLVEQAAA. Residues 19–23 lie on the Extracellular side of the membrane; it reads LGEPQ. A helical membrane pass occupies residues 24–44; that stretch reads LCYILDAVLFLYGIVLTLLYC. Residues 45 to 86 lie on the Cytoplasmic side of the membrane; sequence RLKIQVRKAAIASREKADAVYTGLNTRSQETYETLKHEKPPQ. Residues 54–82 form the ITAM domain; sequence AIASREKADAVYTGLNTRSQETYETLKHE. Phosphotyrosine occurs at positions 65 and 76. T78 is modified (phosphothreonine).

The protein belongs to the CD3Z/FCER1G family. In terms of assembly, igE Fc receptor is a tetramer of an alpha chain, a beta chain, and two disulfide linked gamma chains. Associates with FCGR1A; forms a functional signaling complex. The signaling subunit of immunoglobulin gamma (IgG) Fc receptor complex. As a homodimer or a heterodimer of CD247 and FCER1G, associates with the ligand binding subunit FCGR3A to form a functional receptor complex. Associates with CLEC6A. Interacts with CLEC4E. Interacts (via ITAM domain) with SYK (via SH2 domains); activates SYK, enabling integrin-mediated activation of neutrophils and macrophages. Interacts with CSF2RB and recruits SYK in response to IL3 stimulation; this interaction is direct. Interacts with CD300LH; the interaction may be indirect. Interacts with CD300LD. Interacts with TARM1. As to expression, expressed in mast cells (at protein level). Expressed in basophils (at protein level).

It localises to the cell membrane. In terms of biological role, adapter protein containing an immunoreceptor tyrosine-based activation motif (ITAM) that transduces activation signals from various immunoreceptors. As a component of the high-affinity immunoglobulin E (IgE) receptor, mediates allergic inflammatory signaling in mast cells. As a constitutive component of interleukin-3 receptor complex, selectively mediates interleukin 4/IL4 production by basophils, priming T-cells toward effector T-helper 2 subset. Associates with pattern recognition receptors CLEC4D and CLEC4E to form a functional signaling complex in myeloid cells. Binding of mycobacterial trehalose 6,6'-dimycolate (TDM) to this receptor complex leads to phosphorylation of ITAM, triggering activation of SYK, CARD9 and NF-kappa-B, consequently driving maturation of antigen-presenting cells and shaping antigen-specific priming of T-cells toward effector T-helper 1 and T-helper 17 cell subtypes. May function cooperatively with other activating receptors. Functionally linked to integrin beta-2/ITGB2-mediated neutrophil activation. Also involved in integrin alpha-2/ITGA2-mediated platelet activation. This Mus musculus (Mouse) protein is High affinity immunoglobulin epsilon receptor subunit gamma.